A 307-amino-acid polypeptide reads, in one-letter code: Glutenin, low molecular weight subunit 1D1 (307 aa).

Positions 1-23 (MKTFLVFALLAVAATSAIAQMET) are cleaved as a signal peptide. 2 disordered regions span residues 31–88 (RPWQ…ILPQ) and 105–126 (PFSQ…QQQQ). Low complexity predominate over residues 43 to 88 (TFPQQPLFSQQQQQQLFPQQPSFSQQQPPFWQQQPPFSQQQPILPQ).

It belongs to the gliadin/glutenin family. As to quaternary structure, disulfide-bridge linked aggregates. In terms of tissue distribution, expressed in endosperm, but not in husk and leaf tissues.

Glutenins are high-molecular weight seed storage proteins of wheat endosperm. Thought to be responsible for the visco-elastic property of wheat dough. The sequence is that of Glutenin, low molecular weight subunit 1D1 from Triticum aestivum (Wheat).